Consider the following 402-residue polypeptide: MGAIISRWKTKPSTVELLESLDKDIKDLEEFRAKNQRLLKLWVGRLLFYSSALYLLTCLCVYYLYFPQQWGARLITALPLLAFPALVLLLRKMLIFLFSKRTERNNDKLEDLKTQKRKILEEVMETETYKNAKLILERFDPESKKKAEAEATPVRPHMTPRPGQELRQRHIAMATPGPVLGPMSPGTTPLRTAPGGPPEKGLAGSASTPAGASQAETPQQMMRRSMNPYSPGPGSGMRPPGPPLARPILPRERGAVDRVIEYLVGDGPQNRYALICQQCFSHNGMALKEEFEFVAFRCAYCYFMNPARKTRPQAPRLPEFSFERRLRSESPETQSSAATETPEDSDAPEDDMERTTSADPQNPAADEAPVLQESETEESQPQDVPHAEAEALEEQKKEDESN.

The Cytoplasmic segment spans residues 1–45 (MGAIISRWKTKPSTVELLESLDKDIKDLEEFRAKNQRLLKLWVGR). Residues 46–66 (LLFYSSALYLLTCLCVYYLYF) form a helical membrane-spanning segment. At 67–77 (PQQWGARLITA) the chain is on the lumenal side. Residues 78 to 98 (LPLLAFPALVLLLRKMLIFLF) form a helical membrane-spanning segment. Over 99–402 (SKRTERNNDK…EEQKKEDESN (304 aa)) the chain is Cytoplasmic. Positions 100-128 (KRTERNNDKLEDLKTQKRKILEEVMETET) form a coiled coil. Residues 142–240 (ESKKKAEAEA…PGPGSGMRPP (99 aa)) are disordered. A compositionally biased stretch (polar residues) spans 205 to 222 (SASTPAGASQAETPQQMM). The C4-type; plays a role in ER morphology zinc-finger motif lies at 276-301 (CQQCFSHNGMALKEEFEFVAFRCAYC). Residues 311-402 (RPQAPRLPEF…EEQKKEDESN (92 aa)) form a disordered region. Positions 321 to 330 (SFERRLRSES) are enriched in basic and acidic residues. Positions 341–352 (TPEDSDAPEDDM) are enriched in acidic residues. The segment covering 385 to 402 (PHAEAEALEEQKKEDESN) has biased composition (basic and acidic residues).

This sequence belongs to the lunapark family. In terms of assembly, homodimer; homodimerization requires the C4-type zinc finger motif and decreases during mitosis in a phosphorylation-dependent manner. In terms of processing, phosphorylated. Phosphorylation occurs during interphase. Phosphorylation also occurs during mitosis; these phosphorylations reduce both its homodimerization and the ER three-way tubular junction formation.

The protein resides in the endoplasmic reticulum membrane. In terms of biological role, endoplasmic reticulum (ER)-shaping membrane protein that plays a role in determining ER morphology. Involved in the stabilization of nascent three-way ER tubular junctions within the ER network. May also play a role as a curvature-stabilizing protein within three-way ER tubular junction network. The protein is Endoplasmic reticulum junction formation protein lunapark-B (lnpkb) of Danio rerio (Zebrafish).